Consider the following 455-residue polypeptide: Ornithine decarboxylase (455 aa).

N6-(pyridoxal phosphate)lysine is present on Lys67. Pyridoxal 5'-phosphate contacts are provided by residues Ser197, Gly234, and 271–274; that span reads EPGR. Position 297 is a phosphoserine; by CK2 (Ser297). Residue 325–326 coordinates substrate; that stretch reads YD. The active-site Proton donor; shared with dimeric partner is Cys354. Cys354 is subject to S-nitrosocysteine. Asp355 is a binding site for substrate. Tyr383 lines the pyridoxal 5'-phosphate pocket.

Belongs to the Orn/Lys/Arg decarboxylase class-II family. As to quaternary structure, homodimer. Only the dimer is catalytically active, as the active sites are constructed of residues from both monomers. Pyridoxal 5'-phosphate is required as a cofactor.

The catalysed reaction is L-ornithine + H(+) = putrescine + CO2. It participates in amine and polyamine biosynthesis; putrescine biosynthesis via L-ornithine pathway; putrescine from L-ornithine: step 1/1. Its activity is regulated as follows. Inhibited by antizymes (AZs) OAZ1, OAZ2 and OAZ3 in response to polyamine levels. AZs inhibit the assembly of the functional homodimer by binding to ODC monomers. Additionally, OAZ1 targets ODC monomers for ubiquitin-independent proteolytic destruction by the 26S proteasome. Catalyzes the first and rate-limiting step of polyamine biosynthesis that converts ornithine into putrescine, which is the precursor for the polyamines, spermidine and spermine. Polyamines are essential for cell proliferation and are implicated in cellular processes, ranging from DNA replication to apoptosis. This is Ornithine decarboxylase (ODC1) from Cricetulus griseus (Chinese hamster).